The sequence spans 328 residues: Renalase (328 aa).

FAD contacts are provided by residues Ala13, 32–33, Arg40, and 56–57; these read DK and QY. Residues 57–61 and 96–98 each bind substrate; these read YFTAR and SPD. An FAD-binding site is contributed by Ile128. Substrate is bound at residue Thr185. Residue Asp302 coordinates FAD. Arg308 serves as a coordination point for substrate. Val309 is a binding site for FAD.

It belongs to the bacterial renalase family. Requires FAD as cofactor.

The enzyme catalyses 1,2-dihydro-beta-NAD + O2 + H(+) = H2O2 + NAD(+). It catalyses the reaction 1,2-dihydro-beta-NADP + O2 + H(+) = H2O2 + NADP(+). It carries out the reaction 1,6-dihydro-beta-NADP + O2 + H(+) = H2O2 + NADP(+). The catalysed reaction is 1,6-dihydro-beta-NAD + O2 + H(+) = H2O2 + NAD(+). Functionally, catalyzes the oxidation of the 1,2-dihydro- and 1,6-dihydro- isomeric forms of beta-NAD(P) back to beta-NAD(P)+. Has a preference for 1,2-dihydro-beta-NAD as substrate. May serve to protect primary metabolism dehydrogenases from inhibition by the 1,2-dihydro- and 1,6-dihydro-beta-NAD(P) isomers. The sequence is that of Renalase from Pseudomonas syringae pv. tomato (strain ATCC BAA-871 / DC3000).